The following is a 128-amino-acid chain: Small ribosomal subunit protein uS10 (128 aa).

It belongs to the universal ribosomal protein uS10 family.

The sequence is that of Small ribosomal subunit protein uS10 (RPS20) from Oryza sativa subsp. japonica (Rice).